A 137-amino-acid polypeptide reads, in one-letter code: Phospholipase A2 group V (137 aa).

Residues 1 to 20 form the signal peptide; that stretch reads MKGLLTLAWFLACSVPAVPG. Disulfide bonds link Cys46–Cys137, Cys48–Cys64, Cys63–Cys117, Cys70–Cys110, Cys79–Cys103, and Cys97–Cys108. Ca(2+) contacts are provided by Tyr47, Gly49, and Gly51. His67 is an active-site residue. Residue Asp68 coordinates Ca(2+). Asp111 is an active-site residue.

The protein belongs to the phospholipase A2 family. Ca(2+) serves as cofactor. In terms of processing, this enzyme lacks one of the seven disulfide bonds found in similar PA2 proteins. Expressed in peritoneal macrophages (at protein level). Expressed in heart, skeletal muscle and white adipose tissue.

It localises to the secreted. It is found in the cell membrane. The protein resides in the cytoplasmic vesicle. Its subcellular location is the phagosome. The protein localises to the recycling endosome. It localises to the golgi apparatus. It is found in the cis-Golgi network. The protein resides in the trans-Golgi network. It catalyses the reaction a 1,2-diacyl-sn-glycero-3-phosphocholine + H2O = a 1-acyl-sn-glycero-3-phosphocholine + a fatty acid + H(+). It carries out the reaction 1-hexadecanoyl-2-(9Z-octadecenoyl)-sn-glycero-3-phosphocholine + H2O = 1-hexadecanoyl-sn-glycero-3-phosphocholine + (9Z)-octadecenoate + H(+). The catalysed reaction is 1-hexadecanoyl-2-(5Z,8Z,11Z,14Z-eicosatetraenoyl)-sn-glycero-3-phosphocholine + H2O = 1-hexadecanoyl-sn-glycero-3-phosphocholine + (5Z,8Z,11Z,14Z)-eicosatetraenoate + H(+). The enzyme catalyses 1-hexadecanoyl-2-(9Z,12Z-octadecadienoyl)-sn-glycero-3-phosphoethanolamine + H2O = 1-hexadecanoyl-sn-glycero-3-phosphoethanolamine + (9Z,12Z)-octadecadienoate + H(+). It catalyses the reaction 1-hexadecanoyl-2-(5Z,8Z,11Z,14Z-eicosatetraenoyl)-sn-glycero-3-phosphoethanolamine + H2O = 1-hexadecanoyl-sn-glycero-3-phosphoethanolamine + (5Z,8Z,11Z,14Z)-eicosatetraenoate + H(+). It carries out the reaction 1-octadecanoyl-2-(5Z,8Z,11Z,14Z-eicosatetraenoyl)-sn-glycero-3-phospho-(1D-myo-inositol) + H2O = 1-octadecanoyl-sn-glycero-3-phospho-(1D-myo-inositol) + (5Z,8Z,11Z,14Z)-eicosatetraenoate + H(+). The catalysed reaction is 1-hexadecanoyl-2-(9Z-octadecenoyl)-sn-glycero-3-phosphoglycerol + H2O = 1-hexadecanoyl-sn-glycero-3-phosphoglycerol + (9Z)-octadecenoate + H(+). The enzyme catalyses N-hexadecanoyl-1,2-di-(9Z-octadecenoyl)-sn-glycero-3-phosphoethanolamine + H2O = N-hexadecanoyl-1-(9Z-octadecenoyl)-sn-glycero-3-phosphoethanolamine + (9Z)-octadecenoate + H(+). It catalyses the reaction 1'-[1,2-di-(9Z-octadecenoyl)-sn-glycero-3-phospho]-3'-[1-(9Z-octadecenoyl)-sn-glycero-3-phospho]-glycerol + H2O = 1',3'-bis-[1-(9Z-octadecenoyl)-sn-glycero-3-phospho]-glycerol + (9Z)-octadecenoate + H(+). It carries out the reaction 1',3'-bis[1,2-di-(9Z-octadecenoyl)-sn-glycero-3-phospho]-glycerol + H2O = 1'-[1,2-di-(9Z-octadecenoyl)-sn-glycero-3-phospho]-3'-[1-(9Z-octadecenoyl)-sn-glycero-3-phospho]-glycerol + (9Z)-octadecenoate + H(+). It functions in the pathway lipid metabolism; phospholipid metabolism. The protein operates within lipid metabolism; leukotriene B4 biosynthesis. Its pathway is lipid metabolism; leukotriene C4 biosynthesis. Its function is as follows. Secretory calcium-dependent phospholipase A2 that primarily targets extracellular phospholipids. Hydrolyzes the ester bond of the fatty acyl group attached at sn-2 position of phospholipids (phospholipase A2 activity), preferentially releasing fatty acyl groups with a low degree of unsaturation such as oleoyl (C18:1) and linoleoyl (C18:2) groups. Hydrolyzes low-density lipoprotein (LDL) phospholipids releasing unsaturated fatty acids that drive macrophage polarization toward an M2 phenotype. May act in an autocrine and paracrine manner. Contributes to lipid remodeling of cellular membranes at different subcellular locations and generation of lipid mediators involved in pathogen clearance. Cleaves sn-2 fatty acyl chains of cardiolipin, a major component of the inner membrane of mitochondria and bacterial membranes. Promotes phagocytosis of bacteria in macrophages through production of lysophosphatidylethanolamines. Displays bactericidal activity against Gram-positive bacteria by directly hydrolyzing the phospholipids of the bacterial membrane. Promotes phagocytosis and killing of ingested fungi likely through controlling phagosome-lysosome fusion and phagosome maturation. Plays a role in biosynthesis of cysteinyl leukotrienes (CysLTs) in myeloid cells. In eosinophils, triggers perinuclear arachidonate release and LTC4 synthesis in a PLA2G4A-independent way. In neutrophils, amplifies CysLTs biosynthesis initiated by PLA2G4A. Promotes immune complex clearance in macrophages via stimulating synthesis of CysLTs, which act through CYSLTR1 to trigger phagocytosis. May regulate antigen processing in antigen-presenting cells. In pulmonary macrophages regulates IL33 production required for activation of group 2 innate lymphoid cells. May play a role in the biosynthesis of N-acyl ethanolamines that regulate energy metabolism. Hydrolyzes N-acyl phosphatidylethanolamines to N-acyl lysophosphatidylethanolamines, which are further cleaved by a lysophospholipase D to release N-acyl ethanolamines. The sequence is that of Phospholipase A2 group V (Pla2g5) from Mus musculus (Mouse).